The sequence spans 157 residues: Lipoprotein signal peptidase (157 aa).

3 helical membrane-spanning segments follow: residues 10–30 (LVFM…KYAI), 58–78 (FLEG…FIFL), and 84–104 (LFKN…SNVL). Residues Asp-114 and Asp-131 contribute to the active site. The chain crosses the membrane as a helical span at residues 122–142 (FDFAIFNFADVMIDVGVGVLL).

Belongs to the peptidase A8 family.

The protein resides in the cell inner membrane. It catalyses the reaction Release of signal peptides from bacterial membrane prolipoproteins. Hydrolyzes -Xaa-Yaa-Zaa-|-(S,diacylglyceryl)Cys-, in which Xaa is hydrophobic (preferably Leu), and Yaa (Ala or Ser) and Zaa (Gly or Ala) have small, neutral side chains.. It functions in the pathway protein modification; lipoprotein biosynthesis (signal peptide cleavage). Its function is as follows. This protein specifically catalyzes the removal of signal peptides from prolipoproteins. The sequence is that of Lipoprotein signal peptidase from Helicobacter pylori (strain ATCC 700392 / 26695) (Campylobacter pylori).